Here is a 394-residue protein sequence, read N- to C-terminus: Glycerol-1-phosphate dehydrogenase [NAD(P)+] (394 aa).

NAD(+)-binding positions include aspartate 54, glycine 116–aspartate 120, and threonine 138–serine 141. Residue aspartate 143 coordinates substrate. An NAD(+)-binding site is contributed by serine 147. Aspartate 190 contributes to the substrate binding site. 2 residues coordinate Ni(2+): aspartate 190 and histidine 270. Histidine 274 is a binding site for substrate. Histidine 290 contacts Ni(2+).

This sequence belongs to the glycerol-1-phosphate dehydrogenase family. In terms of assembly, homodimer. Ni(2+) serves as cofactor.

It is found in the cytoplasm. It catalyses the reaction sn-glycerol 1-phosphate + NAD(+) = dihydroxyacetone phosphate + NADH + H(+). It carries out the reaction sn-glycerol 1-phosphate + NADP(+) = dihydroxyacetone phosphate + NADPH + H(+). Functionally, catalyzes the NAD(P)H-dependent reduction of dihydroxyacetonephosphate (DHAP or glycerone phosphate) to glycerol 1-phosphate (G1P). The G1P thus generated is probably used for the synthesis of phosphoglycerolipids in Gram-positive bacterial species. Prefers NADH over NADPH as coenzyme. Is also able to catalyze the reverse reaction, i.e. the NAD(+)-dependent oxidation of G1P but not of G3P. Does not possess glycerol dehydrogenase activity. The polypeptide is Glycerol-1-phosphate dehydrogenase [NAD(P)+] (egsA) (Bacillus subtilis (strain 168)).